The chain runs to 375 residues: Tryptophan--tRNA ligase (375 aa).

Residues 81–89 carry the 'HIGH' region motif; the sequence is PSGPVHIGH. The 'KMSKS' region signature appears at 258 to 262; that stretch reads KMSAS.

The protein belongs to the class-I aminoacyl-tRNA synthetase family.

The protein localises to the cytoplasm. The enzyme catalyses tRNA(Trp) + L-tryptophan + ATP = L-tryptophyl-tRNA(Trp) + AMP + diphosphate + H(+). In Pyrobaculum aerophilum (strain ATCC 51768 / DSM 7523 / JCM 9630 / CIP 104966 / NBRC 100827 / IM2), this protein is Tryptophan--tRNA ligase.